Reading from the N-terminus, the 172-residue chain is MTDHTPALQRPATRTARLSAIEQALLTRIVTSQSQLSQILADQGIEVTQATLSRDLDEIHATKTRLADGTVAYAVGKQNIDEHPASNPDAKTEQQISRVLSGLVTSVAAARNLVVVHTPSGAAQYVASVIDKQPIEGVLGTIAGDDTVMVICSEDDVAKRRAQWLLDVASKA.

Belongs to the ArgR family.

It localises to the cytoplasm. The protein operates within amino-acid biosynthesis; L-arginine biosynthesis [regulation]. Regulates arginine biosynthesis genes. The polypeptide is Arginine repressor (Bifidobacterium adolescentis (strain ATCC 15703 / DSM 20083 / NCTC 11814 / E194a)).